Reading from the N-terminus, the 311-residue chain is T-cell acute lymphocytic leukemia protein 1 homolog (311 aa).

Pro residues predominate over residues 1 to 14 (MTMDRPPAPPPPSS). Residues 1-67 (MTMDRPPAPP…RPSPGPPAAA (67 aa)) are disordered. A compositionally biased stretch (basic and acidic residues) spans 15-25 (DPRDARRHDPE). The region spanning 179–231 (VRRIFTNSRERWRQQNVNGAFAELRKLIPTHPPDKKLSKNEILRLAMKYINFL) is the bHLH domain. Positions 265 to 311 (SPNSSCGSSLDGAASPDSFTEEHDTLDSKHARNLHHAILPVEGSAQR) are disordered. Over residues 284–294 (TEEHDTLDSKH) the composition is skewed to basic and acidic residues.

Efficient DNA binding requires dimerization with another bHLH protein. Forms heterodimers with TCF3. Phosphorylated on serine residues.

It localises to the nucleus. Functionally, implicated in the genesis of hemopoietic malignancies. It may play an important role in hemopoietic differentiation. The chain is T-cell acute lymphocytic leukemia protein 1 homolog (TAL1) from Gallus gallus (Chicken).